Reading from the N-terminus, the 252-residue chain is Imidazole glycerol phosphate synthase subunit HisF (252 aa).

Catalysis depends on residues D11 and D130.

It belongs to the HisA/HisF family. As to quaternary structure, heterodimer of HisH and HisF.

It is found in the cytoplasm. It catalyses the reaction 5-[(5-phospho-1-deoxy-D-ribulos-1-ylimino)methylamino]-1-(5-phospho-beta-D-ribosyl)imidazole-4-carboxamide + L-glutamine = D-erythro-1-(imidazol-4-yl)glycerol 3-phosphate + 5-amino-1-(5-phospho-beta-D-ribosyl)imidazole-4-carboxamide + L-glutamate + H(+). The protein operates within amino-acid biosynthesis; L-histidine biosynthesis; L-histidine from 5-phospho-alpha-D-ribose 1-diphosphate: step 5/9. IGPS catalyzes the conversion of PRFAR and glutamine to IGP, AICAR and glutamate. The HisF subunit catalyzes the cyclization activity that produces IGP and AICAR from PRFAR using the ammonia provided by the HisH subunit. This Polynucleobacter necessarius subsp. necessarius (strain STIR1) protein is Imidazole glycerol phosphate synthase subunit HisF.